We begin with the raw amino-acid sequence, 473 residues long: Cysteine--tRNA ligase (473 aa).

Residue Cys-30 coordinates Zn(2+). The short motif at 32–42 is the 'HIGH' region element; the sequence is MTVYDYCHIGH. Zn(2+) is bound by residues Cys-213, His-238, and Glu-242. A 'KMSKS' region motif is present at residues 270–274; it reads KMSKS. ATP is bound at residue Lys-273.

The protein belongs to the class-I aminoacyl-tRNA synthetase family. Monomer. The cofactor is Zn(2+).

The protein localises to the cytoplasm. The enzyme catalyses tRNA(Cys) + L-cysteine + ATP = L-cysteinyl-tRNA(Cys) + AMP + diphosphate. This Acinetobacter baumannii (strain SDF) protein is Cysteine--tRNA ligase.